The sequence spans 285 residues: Nucleotide-binding protein PSPPH_4154 (285 aa).

8–15 (GRSGSGKS) contributes to the ATP binding site. 60-63 (DARN) provides a ligand contact to GTP.

It belongs to the RapZ-like family.

Its function is as follows. Displays ATPase and GTPase activities. This is Nucleotide-binding protein PSPPH_4154 from Pseudomonas savastanoi pv. phaseolicola (strain 1448A / Race 6) (Pseudomonas syringae pv. phaseolicola (strain 1448A / Race 6)).